The primary structure comprises 949 residues: Coiled-coil domain-containing protein 66 (949 aa).

2 positions are modified to phosphothreonine: T115 and T121. S369 carries the post-translational modification Phosphoserine. Positions 474-558 (QVEEKCRKKQ…EQRIRELAQK (85 aa)) form a coiled coil. The tract at residues 570–949 (GVDTIQIEYN…NQEENFGSSF (380 aa)) is mediates localization to cilia, centrosomes and spindle microtubules and the interaction with PCM1, CEP290, CEP104 and CSPP1. S606 bears the Phosphoserine mark. Disordered regions lie at residues 691–714 (QTKH…KRYI) and 789–809 (SFSK…RTQQ).

As to quaternary structure, homodimer; disulfide-linked. Interacts with CEP290. Interacts with PCM1. Interacts with ARMC9, TOGARAM1, CSPP1 and CEP104. Interacts with CDK5RAP2, CEP152, CEP192, TBG1 and PRC1.

It localises to the cytoplasm. Its subcellular location is the cytoskeleton. The protein localises to the microtubule organizing center. The protein resides in the centrosome. It is found in the centriolar satellite. It localises to the cell projection. Its subcellular location is the cilium. The protein localises to the cilium basal body. The protein resides in the cilium axoneme. It is found in the photoreceptor inner segment. It localises to the photoreceptor outer segment. Its function is as follows. Microtubule-binding protein required for ciliogenesis. May function in ciliogenesis by mediating the transport of proteins like BBS4 to the cilium, but also through the organization of the centriolar satellites. Required for the assembly of signaling-competent cilia with proper structure and length. Mediates this function in part by regulating transition zone assembly and basal body recruitment of the IFT-B complex. Cooperates with the ciliopathy proteins CSPP1 and CEP104 during cilium length regulation. Plays two important roles during cell division. First, is required for mitotic progression via regulation of spindle assembly, organization and orientation, levels of spindle microtubules (MTs), kinetochore-fiber integrity, and chromosome alignment. Second, functions during cytokinesis in part by regulating assembly and organization of central spindle and midbody MTs Plays a role in retina morphogenesis and/or homeostasis. The polypeptide is Coiled-coil domain-containing protein 66 (Pongo abelii (Sumatran orangutan)).